A 319-amino-acid chain; its full sequence is Acetyl esterase (319 aa).

The Involved in the stabilization of the negatively charged intermediate by the formation of the oxyanion hole motif lies at 91-93 (HGG). Catalysis depends on residues serine 165, aspartate 262, and histidine 292.

Belongs to the 'GDXG' lipolytic enzyme family. In terms of assembly, homodimer. Interacts with MalT and MelA.

The protein localises to the cytoplasm. In terms of biological role, displays esterase activity towards short chain fatty esters (acyl chain length of up to 8 carbons). Able to hydrolyze triacetylglycerol (triacetin) and tributyrylglycerol (tributyrin), but not trioleylglycerol (triolein) or cholesterol oleate. Negatively regulates MalT activity by antagonizing maltotriose binding. Inhibits MelA galactosidase activity. The protein is Acetyl esterase of Shigella flexneri serotype 5b (strain 8401).